Consider the following 153-residue polypeptide: Ubiquitin-conjugating enzyme E2-18 kDa (153 aa).

In terms of domain architecture, UBC core spans 2-149; the sequence is AATRRLTREL…AEEFTKKNAE (148 aa). C86 serves as the catalytic Glycyl thioester intermediate.

Belongs to the ubiquitin-conjugating enzyme family.

It carries out the reaction S-ubiquitinyl-[E1 ubiquitin-activating enzyme]-L-cysteine + [E2 ubiquitin-conjugating enzyme]-L-cysteine = [E1 ubiquitin-activating enzyme]-L-cysteine + S-ubiquitinyl-[E2 ubiquitin-conjugating enzyme]-L-cysteine.. It participates in protein modification; protein ubiquitination. Functionally, catalyzes the covalent attachment of ubiquitin to other proteins. This is Ubiquitin-conjugating enzyme E2-18 kDa (Ubc84D) from Drosophila melanogaster (Fruit fly).